A 667-amino-acid chain; its full sequence is Trifunctional UDP-glucose 4,6-dehydratase/UDP-4-keto-6-deoxy-D-glucose 3,5-epimerase/UDP-4-keto-L-rhamnose-reductase RHM2 (667 aa).

NAD(+) is bound at residue 15 to 21; that stretch reads GAAGFIA. Thr134 is a binding site for substrate. The active-site Proton donor is Asp135. Residues Glu136 and Tyr161 each act as proton acceptor in the active site. An NADP(+)-binding site is contributed by 389–395; sequence GKTGWLG.

It in the N-terminal section; belongs to the NAD(P)-dependent epimerase/dehydratase family. dTDP-glucose dehydratase subfamily. This sequence in the C-terminal section; belongs to the dTDP-4-dehydrorhamnose reductase family. It depends on NAD(+) as a cofactor. NADP(+) serves as cofactor. As to expression, expressed in roots, stems, leaves, seedlings, inflorescence tips, and siliques.

It catalyses the reaction UDP-alpha-D-glucose = UDP-4-dehydro-6-deoxy-alpha-D-glucose + H2O. Its pathway is carbohydrate biosynthesis. Its function is as follows. Trifunctional enzyme involved in UDP-beta-L-rhamnose biosynthesis, a precursor of the primary cell wall components rhamnogalacturonan I (RG-I) and rhamnogalacturonan II (RG-II). Catalyzes the dehydration of UDP-glucose to form UDP-4-dehydro-6-deoxy-D-glucose followed by the epimerization of the C3' and C5' positions of UDP-4-dehydro-6-deoxy-D-glucose to form UDP-4-keto-beta-L-rhamnose and the reduction of UDP-4-keto-beta-L-rhamnose to yield UDP-beta-L-rhamnose. Required for the normal seed coat epidermal development. The chain is Trifunctional UDP-glucose 4,6-dehydratase/UDP-4-keto-6-deoxy-D-glucose 3,5-epimerase/UDP-4-keto-L-rhamnose-reductase RHM2 from Arabidopsis thaliana (Mouse-ear cress).